The following is a 259-amino-acid chain: Small ribosomal subunit protein uS2 (259 aa).

Belongs to the universal ribosomal protein uS2 family.

This is Small ribosomal subunit protein uS2 from Streptococcus pneumoniae (strain 70585).